Consider the following 769-residue polypeptide: MFNLKVKDLNGSARGLTQAFAIGELKNQLSVGALQLPLQFTRTFSASMTSELLWEVGKGNIDPVMYARLFFQYAQAGGALSVDELVNQFTEYHQSTACNPEIWRKLTAYITGSSNRAIKADAVGKVPPTAILEQLRTLAPSEHELFHHITTDFVCHVLSPLGFILPDAAYVYRVGRTATYPNFYALVDCVRASDLRRMLTALSSVDSKMLQATFKAKGALAPALISQHLANAATTAFERSRGNFDANAVVSSVLTILGRLWSPSTPKELDPSARLRNTNGIDQLRSNLALFIAYQDMVKQRGRAEVIFSDEELSSTIIPWFIEAMSEVSPFKLRPINETTSYIGQTSAIDHMGQPSHVVVYEDWQFAKEITAFTPVKLANNSNQRFLDVEPGISDRMSATLAPIGNTFAVSAFVKNRTAVYEAVSQRGTVNSNGAEMTLGFPSVVERDYALDRDPMVAIAALRTGIVDESLEARASNDLKRSMFNYYAAVMHYAVAHNPEVVVSEHQGVAAEQGSLYLVWNVRTELRIPVGYNAIEGGSIRTPEPLEAIAYNKPIQPSEVLQAKVLDLANHTTSIHIWPWHEASTEFAYEDAYSVTIRNKRYTAEVKEFELLGLGQRRERVRILKPTVAHAIIQMWYSWFVEDDRTLAAARRTSRDDAEKLAIDGRRMQNAVTLLRKIEMIGTTGIGASAVHLAQSRIVDQMAGRGLIDDSSDLHVGINRHRIRIWAGLAVLQMMGLLSRSEAEALTKVLGDSNALGMVVATTDIDPSL.

In terms of assembly, homodimer. Associates with the polymerase complex.

It is found in the virion. Functionally, P1 is the major inner capsid (core) protein of the polyhedral procapsid, which is responsible for genomic replication and transcription. Forms a dodecahedral shell from 60 asymmetric dimers. Binds to RNA and may be involved in genomic packaging. The protein is Major inner protein P1 (P1) of Pseudomonas phage phi6 (Bacteriophage phi-6).